The primary structure comprises 913 residues: MADDSVLPSPSEITSLADSSVFDSKVAEMSKENLCLASTSNVDEEMPQVEARVIMVQDAGKQEELLKALKTIKIMEVPVIKIKESCPGKSEEKLIKSIINMEMKVPCVKMDSMEEFESLDSPEFENIFVVTDFQNSVFNDLYKADCRIVGPPVILNCAQRGEPLPFSCRPLYCTSMLNLVLCFTGFRKKEELVKLVTLVHHMGGVIRKECNSKVTHLVANCTQGEKFRVAVSLGTPIMKPEWIYKAWERRNEQCFCAAVDDFRNEFKVPPFQDCILSFLGFSDEEKHSMEEMTEMQGGSYLPVGDERCTHLIVEENTVKDLPFEPSKKLFVVKQEWFWGSIQMDARAGETMYLYEKANTPELKKSVSLLSLSTPNSNRKRRRLKETLAQLSRETDLSPFPPRKRPSAEHSLSIGSLLDISNTPESSIHYGETPKSCAKSSRSSTPVPPKQSARWQVAKELYQTESNYVNILATIIQLFQVPLEEEGQRGGPILAPEEIKTIFGSIPDIFDVHMKIKDDLEDLIANWDESRSIGDIFLKYAKDLVKTYPPFVNFFEMSKEMIIKCEKQKPRFHAFLKINQAKPECGRQSLVELLIRPVQRLPSVALLLNDLKKHTADENPDKSTLEKAIGSLKEVMTHINEDKRKTEAQKQIFDVVYEVDGCPANLLSSHRSLVQRVETVSLGEHPCDRGEQVTLFLFNDCLEIARKRHKVIGTFRSPHDRTRPPASLKHIHLMPLSQIKKVLDIRETEDCHNAFALLVRPPTEQANVLLSFQMTSEELPKESWLKMLCRHVANTICKADAENLMYVADPESFEVNTKDMDSTLSRASRAIKKTSKKVTRAFSFSKTPKRALRMALSSSHSSEGRSPPSSGKLAVSRLSSTSSLAGIPSPSLVSLPSFFERRSHTLSRSTTHLI.

Ala-2 carries the N-acetylalanine modification. BRCT domains follow at residues 176-260 (MLNL…AAVD) and 266-354 (FKVP…MYLY). Position 359 is a phosphothreonine; by PKC/PRKCI (Thr-359). Phosphoserine is present on residues Ser-367 and Ser-370. A Phosphothreonine modification is found at Thr-373. Ser-376 carries the phosphoserine modification. 2 consecutive short sequence motifs (nuclear localization signal) follow at residues 378–382 (RKRRR) and 401–405 (PRKRP). 2 disordered regions span residues 389–415 (QLSR…SIGS) and 427–450 (IHYG…PPKQ). Thr-444 carries the phosphothreonine; by CDK1 modification. The DH domain occupies 452–641 (ARWQVAKELY…KEVMTHINED (190 aa)). Lys-611 participates in a covalent cross-link: Glycyl lysine isopeptide (Lys-Gly) (interchain with G-Cter in SUMO2). One can recognise a PH domain in the interval 675–794 (RVETVSLGEH…KMLCRHVANT (120 aa)). 2 positions are modified to phosphoserine: Ser-716 and Ser-842. Thr-846 carries the post-translational modification Phosphothreonine; by CDK1. The segment at 853–874 (MALSSSHSSEGRSPPSSGKLAV) is disordered. Residues 856-870 (SSSHSSEGRSPPSSG) are compositionally biased toward low complexity. Phosphoserine is present on residues Ser-861 and Ser-865.

Homodimer. Homooligomer. Found in the centralspindlin complex. Interacts with NR1I3. Interacts (Thr-359 phosphorylated form) with PARD6A; the interaction is observed in cancer cells. Interacts (Thr-359 phosphorylated form) with PRKCI; the interaction is observed in cancer cells. Interacts with PKP4; the interaction is observed at the midbody. Interacts with RACGAP1; the interaction is direct, occurs in a microtubule-dependent manner, occurs at anaphase and during cytokinesis, is inhibited in metaphase by phosphorylation of ECT2 on Thr-373 and is stimulated in early anaphase by dephosphorylation of ECT2 probably on Thr-373 through CDK1 activity. Interacts with PLK1; the interaction is stimulated upon its phosphorylation on Thr-444. Interacts with RHOA; the interaction results in allosteric activation of ECT2. Interacts with KIF23, PARD3, PARD6B and PRKCQ. Interacts with NEDD9/HEF1. In terms of processing, phosphorylated by PLK1 in vitro. Hyperphosphorylated during the G2 phase of the cell cycle. Phosphorylation at Thr-373 occurs during the G2/M phase, relieves its auto-inhibition status and stimulates its GEF activity. Phosphorylation at Thr-444 in G2/M phase is required for subsequent binding with PLK1 and Rho exchange activation. Dephosphorylated at the time of cytokinesis. Phosphorylation at Thr-359 is required for its transformation activity in cancer cells. Highest expression in testis. Also detectable in brain, kidney, liver and spleen.

It localises to the nucleus. Its subcellular location is the cytoplasm. The protein localises to the cytoskeleton. It is found in the spindle. The protein resides in the cleavage furrow. It localises to the midbody. Its subcellular location is the cell junction. The protein localises to the tight junction. Its activity is regulated as follows. Autoinhibited by the C-terminal PH domain which folds back and binds to the surface of the DH domain, blocking binding of RHOA to the catalytic center of the DH domain. The 2nd BRCT domain is also involved in inhibition, probably by helping to impede RHOA binding. Allosterically activated by binding of activated GTP-bound RHOA to the PH domain which stimulates the release of PH inhibition and promotes the binding of substrate RHOA to the catalytic center. Binding of phosphorylated RACGAP1 to the N-terminal BRCT domain-containing region also releases autoinhibition. Guanine nucleotide exchange factor (GEF) that catalyzes the exchange of GDP for GTP. Promotes guanine nucleotide exchange on the Rho family members of small GTPases, like RHOA, RHOC, RAC1 and CDC42. Required for signal transduction pathways involved in the regulation of cytokinesis. Component of the centralspindlin complex that serves as a microtubule-dependent and Rho-mediated signaling required for the myosin contractile ring formation during the cell cycle cytokinesis. Regulates the translocation of RHOA from the central spindle to the equatorial region. Plays a role in the control of mitotic spindle assembly; regulates the activation of CDC42 in metaphase for the process of spindle fibers attachment to kinetochores before chromosome congression. Involved in the regulation of epithelial cell polarity; participates in the formation of epithelial tight junctions in a polarity complex PARD3-PARD6-protein kinase PRKCQ-dependent manner. Plays a role in the regulation of neurite outgrowth. Inhibits phenobarbital (PB)-induced NR1I3 nuclear translocation. Stimulates the activity of RAC1 through its association with the oncogenic PARD6A-PRKCI complex in cancer cells, thereby acting to coordinately drive tumor cell proliferation and invasion. Also stimulates genotoxic stress-induced RHOB activity in breast cancer cells leading to their cell death. This is Protein ECT2 (Ect2) from Mus musculus (Mouse).